Consider the following 143-residue polypeptide: Transcriptional regulator MraZ (143 aa).

2 SpoVT-AbrB domains span residues 5–47 (EYEH…TLEE) and 76–119 (AIEV…DRET).

This sequence belongs to the MraZ family. In terms of assembly, forms oligomers.

The protein resides in the cytoplasm. It is found in the nucleoid. The protein is Transcriptional regulator MraZ of Staphylococcus haemolyticus (strain JCSC1435).